The sequence spans 1001 residues: Ulvan lyase, long isoform (1001 aa).

Positions Met-1–Ala-21 are cleaved as a signal peptide. A substrate-binding site is contributed by Ser-126–His-127. His-127 acts as the Proton donor/acceptor in catalysis. Asp-189, Asp-199, and Lys-201 together coordinate Ca(2+). The substrate site is built by Tyr-280 and Arg-297. Ca(2+) is bound by residues Asp-300, Asp-303, and Tyr-305. Substrate is bound at residue Tyr-361.

Belongs to the polysaccharide lyase 24 family.

Functionally, ulvan lyase involved in ulvan degradation. Ulvan is the main polysaccharide component of the Ulvales (green seaweed) cell wall. It is composed of disaccharide building blocks comprising 3-sulfated rhamnose (Rha3S) linked to D-glucuronic acid (GlcA), L-iduronic acid (IduA), or D-xylose (Xyl). Ulvan lyase catalyzes preferentially the endolytic cleavage of the glycosidic bond between Rha3S and the uronic acid GlcA, but not IduA, producing oligosaccharides that have unsaturated 4-deoxy-L-threo-hex-4-enopyranosiduronic acid (deltaUA) at the non-reducing end. The most abundant end products in the degradation of the ulvan polysaccharide were deltaUA-Rha3S disaccharides and deltaUA-Rha3S-IduA-Rha3S and deltaUA-Rha3S-Xyl-Rha3S tetrasaccharides. The protein is Ulvan lyase, long isoform of Pseudoalteromonas sp. (strain PLSV).